The primary structure comprises 363 residues: Transcriptional regulator AacuR (363 aa).

The tract at residues 1–24 is disordered; it reads MTSLQCPPPDRTRRSLSPTGPKFR. The zn(2)-C6 fungal-type DNA-binding region spans 27–54; the sequence is CKSCAASKIRCTKEKPQCARCVKRNMVC. Residues 63–72 show a composition bias toward basic residues; the sequence is RRKPGARLKH. A disordered region spans residues 63–104; the sequence is RRKPGARLKHRESITTNAHHSPTTTTITTSRTTSSSPSASPK. Low complexity predominate over residues 76 to 102; that stretch reads ITTNAHHSPTTTTITTSRTTSSSPSAS.

It is found in the nucleus. Functionally, transcriptional regulator; part of the gene cluster that mediates the biosynthesis of the tetrahydroxanthone dimer secalonic acid D. This Aspergillus aculeatus (strain ATCC 16872 / CBS 172.66 / WB 5094) protein is Transcriptional regulator AacuR.